A 246-amino-acid polypeptide reads, in one-letter code: NH(3)-dependent NAD(+) synthetase (246 aa).

29 to 36 (GLSGGIDS) is a binding site for ATP. Position 35 (D35) interacts with Mg(2+). R110 is a binding site for deamido-NAD(+). T130 is a binding site for ATP. Residue E135 coordinates Mg(2+). 2 residues coordinate ATP: K159 and S181.

This sequence belongs to the NAD synthetase family. In terms of assembly, homodimer.

It catalyses the reaction deamido-NAD(+) + NH4(+) + ATP = AMP + diphosphate + NAD(+) + H(+). Its pathway is cofactor biosynthesis; NAD(+) biosynthesis; NAD(+) from deamido-NAD(+) (ammonia route): step 1/1. Its function is as follows. Catalyzes the ATP-dependent amidation of deamido-NAD to form NAD. Uses ammonia as a nitrogen source. This is NH(3)-dependent NAD(+) synthetase from Campylobacter jejuni subsp. doylei (strain ATCC BAA-1458 / RM4099 / 269.97).